A 481-amino-acid polypeptide reads, in one-letter code: Cysteine protease atg-4.1 (481 aa).

Catalysis depends on Cys-112, which acts as the Nucleophile. Residues Asp-313 and His-315 contribute to the active site. Residues Asp-462 to Ala-481 form a disordered region.

Belongs to the peptidase C54 family.

The protein localises to the cytoplasm. It carries out the reaction [protein]-C-terminal L-amino acid-glycyl-phosphatidylethanolamide + H2O = [protein]-C-terminal L-amino acid-glycine + a 1,2-diacyl-sn-glycero-3-phosphoethanolamine. In terms of biological role, cysteine protease required for autophagy. Cleaves the C-terminal amino acid of ATG8 family proteins lgg-1, to reveal a C-terminal glycine. Exposure of the glycine at the C-terminus is essential for ATG8 proteins conjugation to phosphatidylethanolamine (PE) and insertion to membranes, which is necessary for autophagy. Its cleavage activity is functionally redundant to atg-4.2, but it cleaves lgg-1 precursors more efficiently than atg-4.2. Acts redundantly with atg-4.2 to promote the lgg-1 delipidation to release the protein from membranes, which facilitates multiple events during macroautophagy. Unlike atg-4.2 does not seem to be required for autophagosome maturation. This chain is Cysteine protease atg-4.1, found in Caenorhabditis elegans.